We begin with the raw amino-acid sequence, 90 residues long: MIKNPFISVISQEEKEENKGSVEYQILSFTNKIRRLTSHLELHRKDFLSQRGLRKILGKRQRLLAYLSKKNRVRYKELISQLDIREPKTR.

This sequence belongs to the universal ribosomal protein uS15 family. As to quaternary structure, part of the 30S ribosomal subunit.

It localises to the plastid. The protein resides in the chloroplast. The chain is Small ribosomal subunit protein uS15c (rps15) from Nandina domestica (Heavenly bamboo).